The primary structure comprises 142 residues: Protein NIM1-INTERACTING 1 (142 aa).

Positions 47 to 53 are involved in NPR1/NIM1 interaction; sequence DTFFKLI. Residues 60 to 64 carry the Nuclear localization signal motif; it reads RKRRR. Disordered stretches follow at residues 63–86 and 108–142; these read RREE…RSGI and MFVS…NLAL. Residues 110–141 are a coiled coil; the sequence is VSDHKEENTKVEQEEDQTEERNEDKALDLNLA. Positions 111–121 are enriched in basic and acidic residues; it reads SDHKEENTKVE.

This sequence belongs to the NPR1-interactor family. In terms of assembly, interacts with NPR1 C-terminal region.

The protein localises to the nucleus. This Arabidopsis thaliana (Mouse-ear cress) protein is Protein NIM1-INTERACTING 1.